The primary structure comprises 181 residues: ATP-dependent protease subunit HslV (181 aa).

Residue Thr-7 is part of the active site. 3 residues coordinate Na(+): Ala-162, Cys-165, and Thr-168.

Belongs to the peptidase T1B family. HslV subfamily. As to quaternary structure, a double ring-shaped homohexamer of HslV is capped on each side by a ring-shaped HslU homohexamer. The assembly of the HslU/HslV complex is dependent on binding of ATP.

The protein resides in the cytoplasm. It carries out the reaction ATP-dependent cleavage of peptide bonds with broad specificity.. With respect to regulation, allosterically activated by HslU binding. Its function is as follows. Protease subunit of a proteasome-like degradation complex believed to be a general protein degrading machinery. This Coxiella burnetii (strain RSA 331 / Henzerling II) protein is ATP-dependent protease subunit HslV.